A 518-amino-acid chain; its full sequence is Maturase K (518 aa).

It belongs to the intron maturase 2 family. MatK subfamily.

The protein resides in the plastid. It is found in the chloroplast. Its function is as follows. Usually encoded in the trnK tRNA gene intron. Probably assists in splicing its own and other chloroplast group II introns. In Syzygium cumini (Java plum), this protein is Maturase K.